The sequence spans 317 residues: MYTKIIGTGSYLPEQVRTNADLEKMVETSDEWIVTRTGIRERHIAAPNETVATMGYTAANRALEMAGIDKDQIGLIVVATTSATHAFPSAACQIQSMLGIKGCPAFDVAAACAGFTYALSVADQYVKSGAVKYALVIGSDVLARTCDPTDRGTIIIFGDGAGAAVLSASEEPGIISTHLHADGSYGELLTLPNADRVNPENPIYLTMAGNEVFKVAVTELAHIVDETLAANNLDRSALDWLVPHQANLRIISATAKKLGMSMDNVVVTLDRHGNTSAASVPCALDEAVRDGRIKAGQLVLLEAFGGGFTWGSALVRF.

Active-site residues include Cys112 and His244. Residues 245–249 are ACP-binding; it reads QANLR. The active site involves Asn274.

It belongs to the thiolase-like superfamily. FabH family. Homodimer.

The protein resides in the cytoplasm. It catalyses the reaction malonyl-[ACP] + acetyl-CoA + H(+) = 3-oxobutanoyl-[ACP] + CO2 + CoA. It participates in lipid metabolism; fatty acid biosynthesis. Its function is as follows. Catalyzes the condensation reaction of fatty acid synthesis by the addition to an acyl acceptor of two carbons from malonyl-ACP. Catalyzes the first condensation reaction which initiates fatty acid synthesis and may therefore play a role in governing the total rate of fatty acid production. Possesses both acetoacetyl-ACP synthase and acetyl transacylase activities. Its substrate specificity determines the biosynthesis of branched-chain and/or straight-chain of fatty acids. The chain is Beta-ketoacyl-[acyl-carrier-protein] synthase III from Citrobacter koseri (strain ATCC BAA-895 / CDC 4225-83 / SGSC4696).